Consider the following 96-residue polypeptide: Protein RnfH (96 aa).

Belongs to the UPF0125 (RnfH) family.

The sequence is that of Protein RnfH from Escherichia fergusonii (strain ATCC 35469 / DSM 13698 / CCUG 18766 / IAM 14443 / JCM 21226 / LMG 7866 / NBRC 102419 / NCTC 12128 / CDC 0568-73).